Consider the following 851-residue polypeptide: Receptor like protein kinase S.2 (851 aa).

One can recognise a Protein kinase 1 domain in the interval 117-436 (FSDELILGSG…LPSFKSHPLY (320 aa)). ATP contacts are provided by residues 123–131 (LGSGGFGRV) and K146. The Proton acceptor role is filled by D248. Residues 448–471 (SATTTTTRTTMTTTTSTTSFNASS) form a disordered region. One can recognise a Protein kinase 2 domain in the interval 532–819 (FSDARRVAEV…SILDGSERFF (288 aa)). ATP-binding positions include 538–546 (VAEVDFGTA) and K560.

This sequence belongs to the protein kinase superfamily. Ser/Thr protein kinase family.

It carries out the reaction L-seryl-[protein] + ATP = O-phospho-L-seryl-[protein] + ADP + H(+). The catalysed reaction is L-threonyl-[protein] + ATP = O-phospho-L-threonyl-[protein] + ADP + H(+). The polypeptide is Receptor like protein kinase S.2 (LECRKS2) (Arabidopsis thaliana (Mouse-ear cress)).